The sequence spans 423 residues: GTPase HflX (423 aa).

The Hflx-type G domain maps to 202–366 (PAAAIVGYTN…LLETILRNQK (165 aa)). Residues 208–215 (GYTNAGKS), 233–237 (FATLD), 255–258 (DTVG), 321–324 (NKID), and 344–346 (SAK) contribute to the GTP site. Mg(2+) contacts are provided by S215 and T235.

It belongs to the TRAFAC class OBG-HflX-like GTPase superfamily. HflX GTPase family. Monomer. Associates with the 50S ribosomal subunit. The cofactor is Mg(2+).

The protein localises to the cytoplasm. In terms of biological role, GTPase that associates with the 50S ribosomal subunit and may have a role during protein synthesis or ribosome biogenesis. The protein is GTPase HflX of Lacrimispora saccharolytica (strain ATCC 35040 / DSM 2544 / NRCC 2533 / WM1) (Clostridium saccharolyticum).